Here is a 109-residue protein sequence, read N- to C-terminus: Thiosulfate sulfurtransferase GlpE (109 aa).

One can recognise a Rhodanese domain in the interval R16–S104. Residue C64 is the Cysteine persulfide intermediate of the active site.

It belongs to the GlpE family.

It localises to the cytoplasm. It catalyses the reaction thiosulfate + hydrogen cyanide = thiocyanate + sulfite + 2 H(+). The enzyme catalyses thiosulfate + [thioredoxin]-dithiol = [thioredoxin]-disulfide + hydrogen sulfide + sulfite + 2 H(+). Its function is as follows. Transferase that catalyzes the transfer of sulfur from thiosulfate to thiophilic acceptors such as cyanide or dithiols. May function in a CysM-independent thiosulfate assimilation pathway by catalyzing the conversion of thiosulfate to sulfite, which can then be used for L-cysteine biosynthesis. The polypeptide is Thiosulfate sulfurtransferase GlpE (Pseudomonas fluorescens (strain SBW25)).